We begin with the raw amino-acid sequence, 419 residues long: Appendage-associated protein (419 aa).

Residues 1–39 (MIVTYGTVGCPVSRGGSPGCGRRIAEELRLAEDARLRLA) form the signal peptide. The stretch at 232-262 (ERQKAQRRREERAAKAREELRKELNDIDAKW) forms a coiled coil.

It is found in the secreted. Its function is as follows. Associates with actin filament appendages that are formed in the inclusion appendages of the parasitophorous vacuole during infection of the host erythrocyte. This chain is Appendage-associated protein, found in Anaplasma marginale (strain St. Maries).